Consider the following 228-residue polypeptide: Protein crossbronx homolog (228 aa).

Positions 14–168 (LQEYKILAEY…VEQCVEDSQR (155 aa)) constitute a UBC core domain.

The protein belongs to the ubiquitin-conjugating enzyme family. FTS subfamily.

This chain is Protein crossbronx homolog, found in Anopheles gambiae (African malaria mosquito).